The following is a 968-amino-acid chain: uncharacterized protein (968 aa).

Disordered regions lie at residues 124-177, 348-437, 572-595, 608-627, and 837-877; these read SSIS…FSFP, QEDS…VNDS, TTTT…QQNT, PKAS…GSSK, and KASK…KKGK. Positions 131 to 157 are enriched in polar residues; it reads TIESNYLSNPSSPCQSTPILESSTPFS. 3 stretches are compositionally biased toward low complexity: residues 158-177, 352-431, and 572-593; these read QKLM…FSFP, NNNN…NCNN, and TTTT…QQQQ. Over residues 841–857 the composition is skewed to low complexity; the sequence is DSSSSPTASSAAPGDSS.

This is an uncharacterized protein from Dictyostelium discoideum (Social amoeba).